The sequence spans 155 residues: Cyanate hydratase (155 aa).

Residues Arg92, Glu95, and Ser118 contribute to the active site.

Belongs to the cyanase family.

The enzyme catalyses cyanate + hydrogencarbonate + 3 H(+) = NH4(+) + 2 CO2. Functionally, catalyzes the reaction of cyanate with bicarbonate to produce ammonia and carbon dioxide. This Mycobacterium avium (strain 104) protein is Cyanate hydratase.